A 240-amino-acid polypeptide reads, in one-letter code: Small ribosomal subunit protein uS2 (240 aa).

This sequence belongs to the universal ribosomal protein uS2 family. Component of the small ribosomal subunit. Mature ribosomes consist of a small (40S) and a large (60S) subunit. The 40S subunit contains about 33 different proteins and 1 molecule of RNA (18S). The 60S subunit contains about 49 different proteins and 3 molecules of RNA (25S, 5.8S and 5S). Interacts with RPS21.

The protein localises to the cytoplasm. Functionally, required for the assembly and/or stability of the 40S ribosomal subunit. Required for the processing of the 20S rRNA-precursor to mature 18S rRNA in a late step of the maturation of 40S ribosomal subunits. The chain is Small ribosomal subunit protein uS2 from Enterocytozoon bieneusi (strain H348) (Microsporidian parasite).